The following is a 314-amino-acid chain: Deoxymugineic acid synthase 1-D (314 aa).

The tract at residues 1-21 (MGAGEKTAAGMPRIGMGTAVQ) is disordered. Residue Asp44 participates in NADP(+) binding. Tyr49 (proton donor) is an active-site residue. A substrate-binding site is contributed by His112. NADP(+) is bound by residues 158-159 (AN), Gln180, 258-266 (FDEARMREN), and 273-281 (ELTEEERLR).

This sequence belongs to the aldo/keto reductase family. Mostly expressed in root tissues, observed, at low levels, in mesocotyl and embryonic roots, seedling roots, crown and seedling leafes, mature bracts, anthers, pistil, caryopsis and embryos.

It catalyses the reaction 2'-deoxymugineate + NAD(+) = 3''-deamino-3''-oxonicotianamine + NADH + H(+). It carries out the reaction 2'-deoxymugineate + NADP(+) = 3''-deamino-3''-oxonicotianamine + NADPH + H(+). It participates in siderophore biosynthesis. Its function is as follows. Catalyzes the reduction of a 3''-keto intermediate during the biosynthesis of 2'-deoxymugineic acid (DMA) from L-Met. Involved in the formation of phytosiderophores (MAs) belonging to the mugineic acid family and required to acquire iron. This Triticum aestivum (Wheat) protein is Deoxymugineic acid synthase 1-D.